We begin with the raw amino-acid sequence, 586 residues long: Cytosolic Fe-S cluster assembly factor NAR1 (586 aa).

Positions 20, 73, 76, 79, 220, 275, 462, and 466 each coordinate [4Fe-4S] cluster.

This sequence belongs to the NARF family.

Component of the cytosolic Fe/S protein assembly machinery. Required for maturation of extramitochondrial Fe/S proteins. May play a role in the transfer of pre-assembled Fe/S clusters to target apoproteins. This chain is Cytosolic Fe-S cluster assembly factor NAR1 (NAR1), found in Chaetomium globosum (strain ATCC 6205 / CBS 148.51 / DSM 1962 / NBRC 6347 / NRRL 1970) (Soil fungus).